The following is a 473-amino-acid chain: N-lysine methyltransferase SETD6 (473 aa).

Position 39 is an N6-methylated lysine; by autocatalysis (Lys-39). The SET domain occupies 60-286 (PPAQVAVSRQ…KGHEIFNTYG (227 aa)). 73–75 (AGY) contacts S-adenosyl-L-methionine. Trp-122 contacts substrate. Residue Lys-179 is modified to N6-methylated lysine; by autocatalysis. Tyr-223 lines the S-adenosyl-L-methionine pocket. The substrate site is built by Ser-224 and Gln-226. Position 251–252 (251–252 (NH)) interacts with S-adenosyl-L-methionine. Substrate is bound by residues Tyr-262 and Tyr-297. An S-adenosyl-L-methionine-binding site is contributed by Tyr-297. Lys-372 carries the post-translational modification N6-methylated lysine; by autocatalysis.

This sequence belongs to the class V-like SAM-binding methyltransferase superfamily. Histone-lysine methyltransferase family. SETD6 subfamily. Monomer, homodimer and homotrimer; these structures are stabilized in the presence of S-adenosyl-L-methionine (SAM). Automethylated; Lys-39 and Lys-179 serve as the major automethylation sites.

The protein resides in the nucleus. It carries out the reaction L-lysyl-[protein] + S-adenosyl-L-methionine = N(6)-methyl-L-lysyl-[protein] + S-adenosyl-L-homocysteine + H(+). It catalyses the reaction L-lysyl(8)-[histone H2AZ] + S-adenosyl-L-methionine = N(6)-methyl-L-lysyl(8)-[histone H2AZ] + S-adenosyl-L-homocysteine + H(+). With respect to regulation, activated by automethylation. Functionally, protein-lysine N-methyltransferase. Monomethylates 'Lys-310' of the RELA subunit of NF-kappa-B complex, leading to down-regulation of NF-kappa-B transcription factor activity. Monomethylates 'Lys-8' of H2AZ (H2AZK8me1). Required for the maintenance of embryonic stem cell self-renewal. Methylates PAK4. This chain is N-lysine methyltransferase SETD6, found in Homo sapiens (Human).